The following is a 279-amino-acid chain: High choriolytic enzyme 2 (279 aa).

The signal sequence occupies residues 1–20 (MNLASSACLLLLFLLGIAQA). Residues 21–79 (LPVQNEEGHEEGNKEGHGEEGVEEGDEDDFVDFTTRILTSNNNTDQLLLEGDLVAPTNR) constitute a propeptide, activation peptide. Residues 26-40 (EEGHEEGNKEGHGEE) are compositionally biased toward basic and acidic residues. The disordered stretch occupies residues 26–46 (EEGHEEGNKEGHGEEGVEEGD). An N-linked (GlcNAc...) asparagine glycan is attached at Asn-62. Positions 80–279 (NAMKCWYNSC…TRSNVLYNCR (200 aa)) constitute a Peptidase M12A domain. 3 disulfides stabilise this stretch: Cys-84/Cys-89, Cys-129/Cys-278, and Cys-150/Cys-170. Residue His-178 coordinates Zn(2+). Residue Glu-179 is part of the active site. The Zn(2+) site is built by His-182 and His-188.

Zn(2+) is required as a cofactor.

It localises to the zymogen granule. It carries out the reaction Hydrolysis of the inner layer of fish egg envelope. Also hydrolysis of casein and small molecule substrates such as succinyl-Leu-Leu-Val-Tyr-|-7-(4-methyl)coumarylamide.. Participates in the breakdown of the egg envelope, which is derived from the egg extracellular matrix, at the time of hatching. Thus allowing the newly hatched fish to swim free. HCE binds tightly to the egg envelope while it exerts the choriolytic swelling action. The chain is High choriolytic enzyme 2 (hceb) from Oryzias latipes (Japanese rice fish).